We begin with the raw amino-acid sequence, 83 residues long: Acyl carrier protein MmaB (83 aa).

Positions 3–83 constitute a Carrier domain; that stretch reads DPVRQRILLA…LSQSELESPT (81 aa). Serine 39 is subject to O-(pantetheine 4'-phosphoryl)serine.

The protein belongs to the acyl carrier protein (ACP) family. Requires pantetheine 4'-phosphate as cofactor.

It participates in lipid metabolism; fatty acid metabolism. Its function is as follows. Acyl-carrier protein (ACP) involved in the biosynthesis of a unique class of isonitrile lipopeptides (INLPs) that seem to play a role in metal acquisition in M.marinum. Is the dedicated ACP for the loading of activated acyl groups catalyzed by MmaC. This chain is Acyl carrier protein MmaB, found in Mycobacterium marinum (strain ATCC BAA-535 / M).